A 66-amino-acid chain; its full sequence is Large ribosomal subunit protein uL29 (66 aa).

Belongs to the universal ribosomal protein uL29 family.

The chain is Large ribosomal subunit protein uL29 from Rhizobium etli (strain CIAT 652).